The primary structure comprises 181 residues: Adenylate kinase (181 aa).

Residue 10–15 (GAGKGT) coordinates ATP. The NMP stretch occupies residues 30-59 (STGELFRKNIQDGTKLGIEAKRYLDAGDLV). AMP-binding positions include Thr-31, Arg-36, 57–59 (DLV), 85–88 (GYPR), and Gln-92. Residues 126–132 (GRGRADD) are LID. Arg-127 lines the ATP pocket. 2 residues coordinate AMP: Arg-129 and Arg-140. Gly-166 serves as a coordination point for ATP.

The protein belongs to the adenylate kinase family. Monomer.

The protein localises to the cytoplasm. The enzyme catalyses AMP + ATP = 2 ADP. The protein operates within purine metabolism; AMP biosynthesis via salvage pathway; AMP from ADP: step 1/1. Functionally, catalyzes the reversible transfer of the terminal phosphate group between ATP and AMP. Plays an important role in cellular energy homeostasis and in adenine nucleotide metabolism. In Mycobacterium marinum (strain ATCC BAA-535 / M), this protein is Adenylate kinase.